We begin with the raw amino-acid sequence, 463 residues long: NADH dehydrogenase [ubiquinone] iron-sulfur protein 2, mitochondrial (463 aa).

The N-terminal 33 residues, 1-33 (MAALRALCRLRGAAAQVLRPGAGVRLPIQPSRG), are a transit peptide targeting the mitochondrion. Lys62 bears the N6-acetyllysine mark. Arg118 is subject to Symmetric dimethylarginine. Positions 326, 332, and 347 each coordinate [4Fe-4S] cluster.

It belongs to the complex I 49 kDa subunit family. In terms of assembly, core subunit of respiratory chain NADH dehydrogenase (Complex I) which is composed of 45 different subunits. Component of the iron-sulfur (IP) fragment of the enzyme. Interacts with NDUFAF3. Interacts with NDUFAF7. Interacts with CERS2. The cofactor is [4Fe-4S] cluster. In terms of processing, dimethylation at Arg-118 by NDUFAF7 takes place after NDUFS2 assembles into the complex I, leading to stabilize the early intermediate complex.

Its subcellular location is the mitochondrion inner membrane. It carries out the reaction a ubiquinone + NADH + 5 H(+)(in) = a ubiquinol + NAD(+) + 4 H(+)(out). Its function is as follows. Core subunit of the mitochondrial membrane respiratory chain NADH dehydrogenase (Complex I) which catalyzes electron transfer from NADH through the respiratory chain, using ubiquinone as an electron acceptor. Essential for the catalytic activity and assembly of complex I. Redox-sensitive, critical component of the oxygen-sensing pathway in the pulmonary vasculature which plays a key role in acute pulmonary oxygen-sensing and hypoxic pulmonary vasoconstriction. Plays an important role in carotid body sensing of hypoxia. Essential for glia-like neural stem and progenitor cell proliferation, differentiation and subsequent oligodendrocyte or neuronal maturation. In Bos taurus (Bovine), this protein is NADH dehydrogenase [ubiquinone] iron-sulfur protein 2, mitochondrial (NDUFS2).